A 187-amino-acid polypeptide reads, in one-letter code: Ribosome-recycling factor (187 aa).

Belongs to the RRF family.

It localises to the cytoplasm. Functionally, responsible for the release of ribosomes from messenger RNA at the termination of protein biosynthesis. May increase the efficiency of translation by recycling ribosomes from one round of translation to another. The sequence is that of Ribosome-recycling factor from Mycoplasmopsis pulmonis (strain UAB CTIP) (Mycoplasma pulmonis).